Reading from the N-terminus, the 250-residue chain is 2,3-bisphosphoglycerate-dependent phosphoglycerate mutase (250 aa).

Substrate contacts are provided by residues 10 to 17 (RHGESQWN), 23 to 24 (TG), R62, 89 to 92 (ERHY), K100, 116 to 117 (RR), and 185 to 186 (GN). H11 (tele-phosphohistidine intermediate) is an active-site residue. The Proton donor/acceptor role is filled by E89.

Belongs to the phosphoglycerate mutase family. BPG-dependent PGAM subfamily. As to quaternary structure, homodimer.

It catalyses the reaction (2R)-2-phosphoglycerate = (2R)-3-phosphoglycerate. It participates in carbohydrate degradation; glycolysis; pyruvate from D-glyceraldehyde 3-phosphate: step 3/5. Catalyzes the interconversion of 2-phosphoglycerate and 3-phosphoglycerate. This chain is 2,3-bisphosphoglycerate-dependent phosphoglycerate mutase, found in Salmonella choleraesuis (strain SC-B67).